Consider the following 455-residue polypeptide: Glutamyl-tRNA reductase (455 aa).

Residues 49–52 (TCNR), S109, 114–116 (ETQ), and Q120 contribute to the substrate site. Catalysis depends on C50, which acts as the Nucleophile. Residue 189–194 (GAGKMG) participates in NADP(+) binding.

This sequence belongs to the glutamyl-tRNA reductase family. In terms of assembly, homodimer.

The enzyme catalyses (S)-4-amino-5-oxopentanoate + tRNA(Glu) + NADP(+) = L-glutamyl-tRNA(Glu) + NADPH + H(+). It functions in the pathway porphyrin-containing compound metabolism; protoporphyrin-IX biosynthesis; 5-aminolevulinate from L-glutamyl-tRNA(Glu): step 1/2. Catalyzes the NADPH-dependent reduction of glutamyl-tRNA(Glu) to glutamate 1-semialdehyde (GSA). The protein is Glutamyl-tRNA reductase of Bacillus velezensis (strain DSM 23117 / BGSC 10A6 / LMG 26770 / FZB42) (Bacillus amyloliquefaciens subsp. plantarum).